A 768-amino-acid polypeptide reads, in one-letter code: Ribosomal RNA large subunit methyltransferase K/L (768 aa).

The THUMP domain occupies 60-175 (DLYKICLWSR…DKQAELYLDL (116 aa)).

Belongs to the methyltransferase superfamily. RlmKL family.

It is found in the cytoplasm. The catalysed reaction is guanosine(2445) in 23S rRNA + S-adenosyl-L-methionine = N(2)-methylguanosine(2445) in 23S rRNA + S-adenosyl-L-homocysteine + H(+). The enzyme catalyses guanosine(2069) in 23S rRNA + S-adenosyl-L-methionine = N(2)-methylguanosine(2069) in 23S rRNA + S-adenosyl-L-homocysteine + H(+). Functionally, specifically methylates the guanine in position 2445 (m2G2445) and the guanine in position 2069 (m7G2069) of 23S rRNA. The chain is Ribosomal RNA large subunit methyltransferase K/L from Psychrobacter arcticus (strain DSM 17307 / VKM B-2377 / 273-4).